The sequence spans 379 residues: MTTNQQSVAASQPKTIVVKLGTSVLTGGTLALDRAHMVELARQCAELKKQGHSVVVVSSGAIAAGREHLGYPALPNAMASKQLLAAVGQSQLIQTWESLFALYGIKIGQMLLTRADLEDRERFLNARDTINALVDNGIIPVVNENDAVATSEIKVGDNDNLSALVGILCGADKLLLLTDQKGLYTADPRKDPNAELIKEVKVIDDTLRKIAGGSGTTLGTGGMATKLQAADIARRAGIEVIIAAGRGQNVIFDALSPAPQGTRFLPCEEALENRKRWILAGPAASGDIVIDQGAVKAVVEKGSSLLAKGVTKVLGEFSRGEVVRVTDAQGHLVARGIASYSNQDMAKIAGKHSKDIISILGYDYGSEVIHRDDMVVIQE.

Position 19 (Lys19) interacts with ATP. Positions 59, 146, and 158 each coordinate substrate. ATP is bound by residues 178-179 (TD) and 220-226 (TGGMATK). The region spanning 285-363 (SGDIVIDQGA…KDIISILGYD (79 aa)) is the PUA domain.

It belongs to the glutamate 5-kinase family.

It is found in the cytoplasm. The catalysed reaction is L-glutamate + ATP = L-glutamyl 5-phosphate + ADP. Its pathway is amino-acid biosynthesis; L-proline biosynthesis; L-glutamate 5-semialdehyde from L-glutamate: step 1/2. Its function is as follows. Catalyzes the transfer of a phosphate group to glutamate to form L-glutamate 5-phosphate. The polypeptide is Glutamate 5-kinase (Vibrio vulnificus (strain YJ016)).